The chain runs to 338 residues: Anthranilate phosphoribosyltransferase (338 aa).

5-phospho-alpha-D-ribose 1-diphosphate is bound by residues G81, G84–D85, T89, N91–T94, K109–S117, and A121. G81 serves as a coordination point for anthranilate. Residue S93 participates in Mg(2+) binding. Residue N112 coordinates anthranilate. R167 serves as a coordination point for anthranilate. Positions 226 and 227 each coordinate Mg(2+).

The protein belongs to the anthranilate phosphoribosyltransferase family. As to quaternary structure, homodimer. It depends on Mg(2+) as a cofactor.

It catalyses the reaction N-(5-phospho-beta-D-ribosyl)anthranilate + diphosphate = 5-phospho-alpha-D-ribose 1-diphosphate + anthranilate. It functions in the pathway amino-acid biosynthesis; L-tryptophan biosynthesis; L-tryptophan from chorismate: step 2/5. Functionally, catalyzes the transfer of the phosphoribosyl group of 5-phosphorylribose-1-pyrophosphate (PRPP) to anthranilate to yield N-(5'-phosphoribosyl)-anthranilate (PRA). This is Anthranilate phosphoribosyltransferase from Cereibacter sphaeroides (strain KD131 / KCTC 12085) (Rhodobacter sphaeroides).